Here is a 659-residue protein sequence, read N- to C-terminus: UvrABC system protein B (659 aa).

Residues 25 to 182 form the Helicase ATP-binding domain; sequence QSIENGNRGQ…KKLIEIQYER (158 aa). Residue 38–45 coordinates ATP; that stretch reads GVTGSGKT. A Beta-hairpin motif is present at residues 91 to 114; it reads YYDYYQPEAYVPQTDTFIEKDASI. The Helicase C-terminal domain occupies 429-582; that stretch reads QIDDLYGEIQ…QMEYNEEHNI (154 aa). The UVR domain occupies 622 to 657; sequence EKLIEQYEEEMKEAAKNLQFERAAELRDIIKDLKEN.

Belongs to the UvrB family. As to quaternary structure, forms a heterotetramer with UvrA during the search for lesions. Interacts with UvrC in an incision complex.

The protein resides in the cytoplasm. The UvrABC repair system catalyzes the recognition and processing of DNA lesions. A damage recognition complex composed of 2 UvrA and 2 UvrB subunits scans DNA for abnormalities. Upon binding of the UvrA(2)B(2) complex to a putative damaged site, the DNA wraps around one UvrB monomer. DNA wrap is dependent on ATP binding by UvrB and probably causes local melting of the DNA helix, facilitating insertion of UvrB beta-hairpin between the DNA strands. Then UvrB probes one DNA strand for the presence of a lesion. If a lesion is found the UvrA subunits dissociate and the UvrB-DNA preincision complex is formed. This complex is subsequently bound by UvrC and the second UvrB is released. If no lesion is found, the DNA wraps around the other UvrB subunit that will check the other stand for damage. The chain is UvrABC system protein B from Clostridium perfringens (strain SM101 / Type A).